Here is a 415-residue protein sequence, read N- to C-terminus: Lupus La protein homolog (415 aa).

One can recognise an HTH La-type RNA-binding domain in the interval 7–99 (NEKMTALEAK…RRSPSRPLPE (93 aa)). Residues Ser92 and Ser94 each carry the phosphoserine modification. The 77-residue stretch at 111 to 187 (RSVYIKGFPT…TNLLILFKED (77 aa)) folds into the RRM domain. Position 116 is an N6-acetyllysine (Lys116). Position 120 is a phosphothreonine (Thr120). Residues Lys128, Lys327, and Lys356 each carry the N6-acetyllysine modification. Positions 226–346 (EGKMGCLLKF…GRFKGSHVFT (121 aa)) constitute a xRRM domain. Positions 349–415 (RRFKGKGKGN…KKRENGARDK (67 aa)) are disordered. Thr377 carries the phosphothreonine modification. The segment covering 377-415 (TRFDDDDRRRGPMKRGRDGRDREEPASKHKKRENGARDK) has biased composition (basic and acidic residues).

In terms of assembly, interacts with DDX15. May interact with RUFY1. Post-translationally, phosphorylated.

It localises to the nucleus. Functionally, binds to the 3' poly(U) terminus of nascent RNA polymerase III transcripts, protecting them from exonuclease digestion and facilitating their folding and maturation. The polypeptide is Lupus La protein homolog (Ssb) (Mus musculus (Mouse)).